Consider the following 599-residue polypeptide: Laccase-15 (599 aa).

An N-terminal signal peptide occupies residues 1–29 (MKRCQSSRPTAAVAAVVAAVSMIIVLVSG). Plastocyanin-like domains lie at 46 to 162 (VVSQ…PRHG) and 173 to 328 (REVP…YSSN). 2 N-linked (GlcNAc...) asparagine glycosylation sites follow: Asn-51 and Asn-92. Residues His-96 and His-98 each contribute to the Cu cation site. N-linked (GlcNAc...) asparagine glycosylation is present at Asn-124. His-141 and His-143 together coordinate Cu cation. N-linked (GlcNAc...) asparagine glycans are attached at residues Asn-193, Asn-217, Asn-331, Asn-355, Asn-412, and Asn-454. The Plastocyanin-like 3 domain maps to 444–586 (ELAERPPRAY…AAVFIVEDGP (143 aa)). Positions 503, 506, 508, 565, 566, 567, 571, and 576 each coordinate Cu cation.

This sequence belongs to the multicopper oxidase family. The cofactor is Cu cation.

It localises to the secreted. It is found in the extracellular space. The protein resides in the apoplast. The enzyme catalyses 4 hydroquinone + O2 = 4 benzosemiquinone + 2 H2O. In terms of biological role, lignin degradation and detoxification of lignin-derived products. This chain is Laccase-15 (LAC15), found in Oryza sativa subsp. japonica (Rice).